We begin with the raw amino-acid sequence, 359 residues long: Molybdenum import ATP-binding protein ModC (359 aa).

The region spanning 1 to 229 is the ABC transporter domain; sequence MLELNFSQQL…SALRPWLQRE (229 aa). An ATP-binding site is contributed by 31–38; that stretch reads GLSGAGKT. The Mop domain occupies 289 to 354; sequence SSSIRNILPV…IKSVSFNRQN (66 aa).

This sequence belongs to the ABC transporter superfamily. Molybdate importer (TC 3.A.1.8) family. In terms of assembly, the complex is composed of two ATP-binding proteins (ModC), two transmembrane proteins (ModB) and a solute-binding protein (ModA).

It is found in the cell inner membrane. The catalysed reaction is molybdate(out) + ATP + H2O = molybdate(in) + ADP + phosphate + H(+). Its function is as follows. Part of the ABC transporter complex ModABC involved in molybdenum import. Responsible for energy coupling to the transport system. This is Molybdenum import ATP-binding protein ModC from Yersinia pestis bv. Antiqua (strain Antiqua).